Reading from the N-terminus, the 224-residue chain is UPF0758 protein AFE_0358 (224 aa).

The MPN domain maps to 102 to 224; that stretch reads GLDSPLRVRQ…PLSLREQGGW (123 aa). Histidine 173, histidine 175, and aspartate 186 together coordinate Zn(2+). Residues 173–186 carry the JAMM motif motif; sequence HNHPSGVAEPSAAD.

It belongs to the UPF0758 family.

The polypeptide is UPF0758 protein AFE_0358 (Acidithiobacillus ferrooxidans (strain ATCC 23270 / DSM 14882 / CIP 104768 / NCIMB 8455) (Ferrobacillus ferrooxidans (strain ATCC 23270))).